A 66-amino-acid chain; its full sequence is Large ribosomal subunit protein bL33c (66 aa).

It belongs to the bacterial ribosomal protein bL33 family.

It is found in the plastid. Its subcellular location is the chloroplast. The chain is Large ribosomal subunit protein bL33c from Brachypodium distachyon (Purple false brome).